We begin with the raw amino-acid sequence, 294 residues long: Acetyl-coenzyme A carboxylase carboxyl transferase subunit beta (294 aa).

The CoA carboxyltransferase N-terminal domain maps to 29-294 (LWEKCPECGQ…TQEVKLQTNA (266 aa)). Zn(2+) is bound by residues Cys33, Cys36, Cys52, and Cys55. Residues 33-55 (CPECGQVVYRKDLIDNCSVCSNC) form a C4-type zinc finger.

Belongs to the AccD/PCCB family. Acetyl-CoA carboxylase is a heterohexamer composed of biotin carboxyl carrier protein (AccB), biotin carboxylase (AccC) and two subunits each of ACCase subunit alpha (AccA) and ACCase subunit beta (AccD). Zn(2+) is required as a cofactor.

The protein resides in the cytoplasm. It catalyses the reaction N(6)-carboxybiotinyl-L-lysyl-[protein] + acetyl-CoA = N(6)-biotinyl-L-lysyl-[protein] + malonyl-CoA. It participates in lipid metabolism; malonyl-CoA biosynthesis; malonyl-CoA from acetyl-CoA: step 1/1. Functionally, component of the acetyl coenzyme A carboxylase (ACC) complex. Biotin carboxylase (BC) catalyzes the carboxylation of biotin on its carrier protein (BCCP) and then the CO(2) group is transferred by the transcarboxylase to acetyl-CoA to form malonyl-CoA. The polypeptide is Acetyl-coenzyme A carboxylase carboxyl transferase subunit beta (Prochlorococcus marinus (strain NATL1A)).